Reading from the N-terminus, the 321-residue chain is tRNA uridine(34) hydroxylase (321 aa).

Positions 123–217 constitute a Rhodanese domain; sequence SDPDVTVIDT…YLEEVPEGNS (95 aa). Cys177 functions as the Cysteine persulfide intermediate in the catalytic mechanism. Residues 294–308 are compositionally biased toward basic and acidic residues; that stretch reads RKGELHIGDRADIAK. Positions 294–321 are disordered; it reads RKGELHIGDRADIAKSRTTQGAPSADGE.

It belongs to the TrhO family.

The enzyme catalyses uridine(34) in tRNA + AH2 + O2 = 5-hydroxyuridine(34) in tRNA + A + H2O. In terms of biological role, catalyzes oxygen-dependent 5-hydroxyuridine (ho5U) modification at position 34 in tRNAs. The protein is tRNA uridine(34) hydroxylase of Teredinibacter turnerae (strain ATCC 39867 / T7901).